Consider the following 843-residue polypeptide: Glycogen phosphorylase, brain form (843 aa).

The residue at position 2 (alanine 2) is an N-acetylalanine. Phosphoserine; by PHK; in form phosphorylase A is present on serine 15. Positions 43, 197, and 310 each coordinate AMP. Tyrosine 197 carries the post-translational modification Phosphotyrosine. Tyrosine 473 is subject to Phosphotyrosine. Lysine 569 contacts pyridoxal 5'-phosphate. Residues 677 to 678 (TG) are pyridoxal 5'-phosphate. Lysine 681 carries the N6-(pyridoxal phosphate)lysine modification.

It belongs to the glycogen phosphorylase family. Homodimer. Dimers associate into a tetramer to form the enzymatically active phosphorylase A. The cofactor is pyridoxal 5'-phosphate. In terms of processing, phosphorylation of Ser-15 converts phosphorylase B (unphosphorylated) to phosphorylase A.

The catalysed reaction is [(1-&gt;4)-alpha-D-glucosyl](n) + phosphate = [(1-&gt;4)-alpha-D-glucosyl](n-1) + alpha-D-glucose 1-phosphate. Its activity is regulated as follows. Activity of phosphorylase is controlled both by allosteric means (through the non-covalent binding of metabolites) and by covalent modification. Thus AMP allosterically activates, whereas ATP, ADP, and glucose-6-phosphate allosterically inhibit, phosphorylase B. Its function is as follows. Glycogen phosphorylase that regulates glycogen mobilization. Phosphorylase is an important allosteric enzyme in carbohydrate metabolism. Enzymes from different sources differ in their regulatory mechanisms and in their natural substrates. However, all known phosphorylases share catalytic and structural properties. The chain is Glycogen phosphorylase, brain form (PYGB) from Bos taurus (Bovine).